The chain runs to 843 residues: Structure-specific endonuclease subunit SLX4 (843 aa).

Disordered stretches follow at residues 26–111, 281–313, 339–377, 603–655, and 729–748; these read SPPS…KTTT, AIPTPTESSTTEDIQGSSSKQQRVKAKKPQKGK, NVAPKSPGRKNISNRPSGMKHSNSGRGKSSTLKNDNGPP, SKTF…AKAL, and ATPNARHSRQRSSSTSFSIE. Composition is skewed to polar residues over residues 50-69 and 285-301; these read ASFSKTPSRKTTSPDSNGEN and PTESSTTEDIQGSSSKQ. Over residues 302–311 the composition is skewed to basic residues; that stretch reads QRVKAKKPQK. 2 stretches are compositionally biased toward polar residues: residues 349–372 and 603–616; these read NISNRPSGMKHSNSGRGKSSTLKN and SKTFMPESKPNQGT. Over residues 617 to 636 the composition is skewed to basic and acidic residues; that stretch reads DDARKNGFRKENHSDVRVRP. Residues 739–748 show a composition bias toward low complexity; that stretch reads RSSSTSFSIE.

The protein belongs to the SLX4 family. Forms a heterodimer with SLX1. Post-translationally, phosphorylated in response to DNA damage.

It is found in the nucleus. In terms of biological role, regulatory subunit of the SLX1-SLX4 structure-specific endonuclease that resolves DNA secondary structures generated during DNA repair and recombination. Has endonuclease activity towards branched DNA substrates, introducing single-strand cuts in duplex DNA close to junctions with ss-DNA. The polypeptide is Structure-specific endonuclease subunit SLX4 (Ajellomyces capsulatus (strain G186AR / H82 / ATCC MYA-2454 / RMSCC 2432) (Darling's disease fungus)).